A 579-amino-acid polypeptide reads, in one-letter code: Solute carrier family 15 member 5 (579 aa).

The next 11 membrane-spanning stretches (helical) occupy residues 77–97 (CQAAILNLCFIGTSILTPVFV), 110–130 (LVYICLFLHFLGTALLSVVAF), 154–174 (LFYVALLTICLGIGGVRAIVC), 191–211 (SFFNWFYWLMNLNATIVFLGI), 221–241 (ALVLLIPFMSMLMAVITLHMI), 304–324 (TFFLTLLPLFIFQLLYRMCIM), 343–363 (GFLLPIAVMNAISSLPLLILA), 386–406 (CIIAGNLFAALSVMIAGFFEI), 422–442 (VLTVSSMPCFYLILQYVLLGV), 472–492 (TLFNGFGCFTGALLVKLVYLI), and 509–529 (SFFFFLASLTLLNVLGFCSVS).

The protein belongs to the major facilitator superfamily. Proton-dependent oligopeptide transporter (POT/PTR) (TC 2.A.17) family.

It localises to the membrane. In terms of biological role, proton oligopeptide cotransporter. This is Solute carrier family 15 member 5 (SLC15A5) from Homo sapiens (Human).